The sequence spans 809 residues: ATP-dependent zinc metalloprotease FTSH 3, mitochondrial (809 aa).

The N-terminal 83 residues, 1–83 (MTMIFFSKLN…FANPRLRRFF (83 aa)), are a transit peptide targeting the mitochondrion. Positions 93–121 (YENYFPKDKQEPKSDQKSEHKEGSEKNEN) are enriched in basic and acidic residues. Positions 93 to 122 (YENYFPKDKQEPKSDQKSEHKEGSEKNENE) are disordered. Residues 132–152 (FQNLLIPLLALAVFFSTFSFG) traverse the membrane as a helical segment. 362–369 (GPPGTGKT) is an ATP binding site. Residue His586 coordinates Zn(2+). Glu587 is an active-site residue. Residues His590 and Asp662 each coordinate Zn(2+). Positions 776–809 (GFEETEKDSAATPTVEPVVDDGAPPPFEPQVVPT) are disordered.

In the N-terminal section; belongs to the AAA ATPase family. This sequence in the C-terminal section; belongs to the peptidase M41 family. The cofactor is Zn(2+).

It localises to the mitochondrion inner membrane. In terms of biological role, probable ATP-dependent zinc metallopeptidase. Involved in the assembly and/or stability of the complexes I and V of the mitochondrial oxidative phosphorylation system. This Arabidopsis thaliana (Mouse-ear cress) protein is ATP-dependent zinc metalloprotease FTSH 3, mitochondrial (FTSH3).